We begin with the raw amino-acid sequence, 94 residues long: Cell division topological specificity factor (94 aa).

Belongs to the MinE family.

Prevents the cell division inhibition by proteins MinC and MinD at internal division sites while permitting inhibition at polar sites. This ensures cell division at the proper site by restricting the formation of a division septum at the midpoint of the long axis of the cell. This Alkaliphilus metalliredigens (strain QYMF) protein is Cell division topological specificity factor.